A 135-amino-acid chain; its full sequence is Large ribosomal subunit protein uL16 (135 aa).

This sequence belongs to the universal ribosomal protein uL16 family. Part of the 50S ribosomal subunit.

In terms of biological role, binds 23S rRNA and is also seen to make contacts with the A and possibly P site tRNAs. This Desulforapulum autotrophicum (strain ATCC 43914 / DSM 3382 / VKM B-1955 / HRM2) (Desulfobacterium autotrophicum) protein is Large ribosomal subunit protein uL16.